A 240-amino-acid polypeptide reads, in one-letter code: Serine protease SplB (240 aa).

An N-terminal signal peptide occupies residues methionine 1–alanine 36. Residues histidine 75, aspartate 113, and serine 193 each act as charge relay system in the active site.

It belongs to the peptidase S1B family.

The protein localises to the secreted. Functionally, serine protease that cleaves specifically after the sequence Trp-Glu-Leu-Gln. The protein is Serine protease SplB (splB) of Staphylococcus aureus (strain USA300).